A 453-amino-acid polypeptide reads, in one-letter code: Frizzled/smoothened-like sans CRD protein G (453 aa).

The N-terminal stretch at 1-24 (MIYILKNFIIILFFLLIILKRIES) is a signal peptide. Residues 25-89 (QSLPSLPSPT…PFFTLDEWNK (65 aa)) lie on the Extracellular side of the membrane. 2 N-linked (GlcNAc...) asparagine glycosylation sites follow: asparagine 49 and asparagine 67. Residues 90-110 (FLYMSLVMGTISFLCGLFLLI) form a helical membrane-spanning segment. Residues 111-124 (TYSPIVNKTHNRHT) lie on the Cytoplasmic side of the membrane. The chain crosses the membrane as a helical span at residues 125–145 (IGVMCMSFGVCLAMCSDMWNF). The Extracellular segment spans residues 146–170 (GSNFTDQKSICPSPGQYLTTSNSRC). Asparagine 148 carries an N-linked (GlcNAc...) asparagine glycan. The helical transmembrane segment at 171–191 (LGSGIVLQFGGVFGFLNWTLL) threads the bilayer. Over 192–209 (SFDLFMNIKGIITKNYDK) the chain is Cytoplasmic. Residues 210–230 (YYFVATFIIAIIFTFVPIVND) form a helical membrane-spanning segment. Residues 231-250 (QYSMSYIGLGCWLGSAVYQL) are Extracellular-facing. A helical transmembrane segment spans residues 251 to 271 (IFFWILLSICLIVSSVFIILI). Topologically, residues 272–296 (LKEIYIIIKQSKQKTSLKGNIRPLL) are cytoplasmic. The chain crosses the membrane as a helical span at residues 297-317 (CITVTSFAFFYMFFYYISIVI). The Extracellular portion of the chain corresponds to 318 to 352 (EGDYYERILNEYTDCLMDPTKDVSECKFPRMSVAN). Residues 353-373 (EFVFLLCLRLLGIGAFIFYGI) form a helical membrane-spanning segment. The Cytoplasmic segment spans residues 374-453 (NKEVKKIWLN…DDNFKPIIIK (80 aa)).

The protein belongs to the G-protein coupled receptor Fz/Smo family.

The protein localises to the membrane. This is Frizzled/smoothened-like sans CRD protein G (fscG) from Dictyostelium discoideum (Social amoeba).